We begin with the raw amino-acid sequence, 291 residues long: Maintenance of mitochondrial morphology protein 1 (291 aa).

Residues 1 to 16 (MPNNYVFSLQPTFTQG) lie on the Lumenal side of the membrane. The helical transmembrane segment at 17–37 (LILGQLSILVLLGMILKFLFL) threads the bilayer. Residues 38–291 (DSTQHPFESS…KKEMSDADLS (254 aa)) are Cytoplasmic-facing. The SMP-LTD domain occupies 73–277 (NAESAEWFNV…LPGLASVVDV (205 aa)).

Belongs to the MMM1 family. In terms of assembly, homodimer. Component of the ER-mitochondria encounter structure (ERMES) or MDM complex, composed of MMM1, MDM10, MDM12 and MDM34. An MMM1 homodimer associates with one molecule of MDM12 on each side in a pairwise head-to-tail manner, and the SMP-LTD domains of MMM1 and MDM12 generate a continuous hydrophobic tunnel for phospholipid trafficking.

The protein resides in the endoplasmic reticulum membrane. Functionally, component of the ERMES/MDM complex, which serves as a molecular tether to connect the endoplasmic reticulum (ER) and mitochondria. Components of this complex are involved in the control of mitochondrial shape and protein biogenesis, and function in nonvesicular lipid trafficking between the ER and mitochondria. The MDM12-MMM1 subcomplex functions in the major beta-barrel assembly pathway that is responsible for biogenesis of all outer membrane beta-barrel proteins, and acts in a late step after the SAM complex. The MDM10-MDM12-MMM1 subcomplex further acts in the TOM40-specific pathway after the action of the MDM12-MMM1 complex. Essential for establishing and maintaining the structure of mitochondria and maintenance of mtDNA nucleoids. This chain is Maintenance of mitochondrial morphology protein 1, found in Laccaria bicolor (strain S238N-H82 / ATCC MYA-4686) (Bicoloured deceiver).